The chain runs to 298 residues: ADP/ATP translocase 3 (298 aa).

Methionine 1 is subject to N-acetylmethionine. The Mitochondrial intermembrane segment spans residues 1–7 (MTEQAIS). The residue at position 2 (threonine 2) is an N-acetylthreonine; in ADP/ATP translocase 3, N-terminally processed. The stretch at 6–98 (ISFAKDFLAG…FAFKDKYKQI (93 aa)) is one Solcar 1 repeat. The helical transmembrane segment at 8 to 37 (FAKDFLAGGIAAAISKTAVAPIERVKLLLQ) threads the bilayer. Over 38–74 (VQHASKQIAADKQYKGIVDCIVRIPKEQGVLSFWRGN) the chain is Mitochondrial matrix. Lysine 52 is modified (N6,N6,N6-trimethyllysine). Residues 75 to 99 (LANVIRYFPTQALNFAFKDKYKQIF) traverse the membrane as a helical segment. 2 residues coordinate ADP: arginine 80 and lysine 92. Residues 100-109 (LGGVDKRTQF) are Mitochondrial intermembrane-facing. Lysine 105 is modified (N6-acetyllysine). A helical membrane pass occupies residues 110-130 (WRYFAGNLASGGAAGATSLCF). Solcar repeat units follow at residues 111–201 (RYFA…AKGM) and 212–297 (VSWM…LKKV). The Mitochondrial matrix segment spans residues 131–178 (VYPLDFARTRLAADVGKSGSEREFRGLGDCLVKITKSDGIRGLYQGFN). The helical transmembrane segment at 179–199 (VSVQGIIIYRAAYFGIYDTAK) threads the bilayer. Residues 200–210 (GMLPDPKNTHI) are Mitochondrial intermembrane-facing. The chain crosses the membrane as a helical span at residues 211–231 (VVSWMIAQTVTAVAGVVSYPF). Topologically, residues 232-273 (DTVRRRMMMQSGRKGADIMYKGTVDCWRKILKDEGGKAFFKG) are mitochondrial matrix. Arginine 235 is an ADP binding site. The tract at residues 235–240 (RRRMMM) is important for transport activity. The Nucleotide carrier signature motif motif lies at 235-240 (RRRMMM). Position 268 is an N6-acetyllysine (lysine 268). The chain crosses the membrane as a helical span at residues 274-291 (AWSNVLRGMGGAFVLVLY). The Mitochondrial intermembrane segment spans residues 292–298 (DELKKVI).

Belongs to the mitochondrial carrier (TC 2.A.29) family. Monomer. Found in a complex with ARL2, ARL2BP and SLC25A6/ANT3. Trimethylated by ANTKMT at Lys-52.

The protein localises to the mitochondrion inner membrane. It localises to the membrane. It catalyses the reaction ADP(in) + ATP(out) = ADP(out) + ATP(in). The enzyme catalyses H(+)(in) = H(+)(out). The matrix-open state (m-state) is inhibited by the membrane-permeable bongkrekic acid (BKA). The cytoplasmic-open state (c-state) is inhibited by the membrane-impermeable toxic inhibitor carboxyatractyloside (CATR). Proton transporter activity is inhibited by ADP:ATP antiporter activity. Functionally, ADP:ATP antiporter that mediates import of ADP into the mitochondrial matrix for ATP synthesis, and export of ATP out to fuel the cell. Cycles between the cytoplasmic-open state (c-state) and the matrix-open state (m-state): operates by the alternating access mechanism with a single substrate-binding site intermittently exposed to either the cytosolic (c-state) or matrix (m-state) side of the inner mitochondrial membrane. In addition to its ADP:ATP antiporter activity, also involved in mitochondrial uncoupling and mitochondrial permeability transition pore (mPTP) activity. Plays a role in mitochondrial uncoupling by acting as a proton transporter: proton transport uncouples the proton flows via the electron transport chain and ATP synthase to reduce the efficiency of ATP production and cause mitochondrial thermogenesis. Proton transporter activity is inhibited by ADP:ATP antiporter activity, suggesting that SLC25A6/ANT3 acts as a master regulator of mitochondrial energy output by maintaining a delicate balance between ATP production (ADP:ATP antiporter activity) and thermogenesis (proton transporter activity). Proton transporter activity requires free fatty acids as cofactor, but does not transport it. Also plays a key role in mPTP opening, a non-specific pore that enables free passage of the mitochondrial membranes to solutes of up to 1.5 kDa, and which contributes to cell death. It is however unclear if SLC25A6/ANT3 constitutes a pore-forming component of mPTP or regulates it. The protein is ADP/ATP translocase 3 of Bos taurus (Bovine).